The primary structure comprises 382 residues: uncharacterized protein (382 aa).

11 helical membrane-spanning segments follow: residues 8-28 (VMLL…LNTL), 45-65 (MVSS…GYLI), 75-95 (YLAS…VGFW), 102-122 (FIAG…LMCS), 131-151 (LLAA…LLVS), 157-177 (LLHV…PLLF), 204-224 (LGVN…GLMP), 231-251 (GMAN…GILG), 274-294 (VVIL…ALFI), 325-345 (ALLL…AMLM), and 349-369 (SDNL…LMLL).

This sequence belongs to the major facilitator superfamily. YcaD (TC 2.A.1.26) family.

The protein resides in the cell inner membrane. This is an uncharacterized protein from Salmonella gallinarum (strain 287/91 / NCTC 13346).